A 439-amino-acid chain; its full sequence is Glucose-1-phosphate adenylyltransferase (439 aa).

Residues Tyr-122, Gly-187, Glu-202–Lys-203, and Ser-220 each bind alpha-D-glucose 1-phosphate.

The protein belongs to the bacterial/plant glucose-1-phosphate adenylyltransferase family. Homotetramer.

It carries out the reaction alpha-D-glucose 1-phosphate + ATP + H(+) = ADP-alpha-D-glucose + diphosphate. It participates in glycan biosynthesis; glycogen biosynthesis. In terms of biological role, involved in the biosynthesis of ADP-glucose, a building block required for the elongation reactions to produce glycogen. Catalyzes the reaction between ATP and alpha-D-glucose 1-phosphate (G1P) to produce pyrophosphate and ADP-Glc. This chain is Glucose-1-phosphate adenylyltransferase, found in Thiobacillus denitrificans (strain ATCC 25259 / T1).